The following is an 853-amino-acid chain: Wolframin (853 aa).

Residues 139–179 (KQLERKMRRIYNLQRKRRRRDDDRSSSSSEGEQEPECEPLE) form a disordered region. Over residues 144-157 (KMRRIYNLQRKRRR) the composition is skewed to basic residues. Positions 169–179 (GEQEPECEPLE) are enriched in acidic residues. The next 10 membrane-spanning stretches (helical) occupy residues 238 to 258 (MIFHPLIFFTLFYHRLLNLIV), 259 to 279 (SIPNVIPLSVRCSVLVAISWW), 285 to 305 (LPLVSYYLSLGIMIWATCKML), 347 to 367 (LYFFCAFICNLIVYPLVTDAW), 373 to 393 (LTIISGALTFITMCVSMYASS), 446 to 466 (FCLNCRTALYLFIPVLLIMMA), 473 to 493 (GVYTFLIPHCVTLSWLQVCIA), 513 to 533 (IVLFLPLFGIVALLVPVFVAI), 545 to 565 (WGSTALACGLVVVLSCILALN), and 572 to 592 (ITMLQLITAITTACLLVLPYM). N-linked (GlcNAc...) asparagine glycosylation is found at Asn694 and Asn769.

As to expression, detected in adult brain.

The protein localises to the membrane. It localises to the endoplasmic reticulum. Its subcellular location is the mitochondrion. Participates in the regulation of cellular Ca(2+) homeostasis, at least partly, by modulating the filling state of the endoplasmic reticulum Ca(2+) store. In neurons and glial cells, has a role in maintaining neuronal function and integrity during aging. This is Wolframin from Drosophila melanogaster (Fruit fly).